The sequence spans 312 residues: Olfactory receptor 10K2 (312 aa).

Over 1 to 25 the chain is Extracellular; sequence MERVNETVVREVIFLGFSSLARLQQ. Asparagine 5 carries an N-linked (GlcNAc...) asparagine glycan. A helical membrane pass occupies residues 26–46; it reads LLFVIFLLLYLFTLGTNAIII. The Cytoplasmic segment spans residues 47–54; that stretch reads STIVLDRA. Residues 55–75 traverse the membrane as a helical segment; sequence LHIPMYFFLAILSCSEICYTF. The Extracellular segment spans residues 76-99; that stretch reads IIVPKMLVDLLSQKKTISFLGCAI. The chain crosses the membrane as a helical span at residues 100-120; sequence QMFSFLFLGCSHSFLLAVMGY. At 121 to 139 the chain is on the cytoplasmic side; it reads DRYIAICNPLRYSVLMGHG. Residues 140 to 160 traverse the membrane as a helical segment; the sequence is VCMGLVAAACACGFTVAQIIT. The Extracellular segment spans residues 161 to 197; the sequence is SLVFHLPFYSSNQLHHFFCDIAPVLKLASHHNHFSQI. The chain crosses the membrane as a helical span at residues 198–217; the sequence is VIFMLCTLVLAIPLLLILVS. At 218–237 the chain is on the cytoplasmic side; the sequence is YVHILSAILQFPSTLGRCKA. The chain crosses the membrane as a helical span at residues 238–258; sequence FSTCVSHLIIVTVHYGCASFI. Residues 259 to 271 lie on the Extracellular side of the membrane; the sequence is YLRPQSNYSSSQD. Asparagine 265 is a glycosylation site (N-linked (GlcNAc...) asparagine). The chain crosses the membrane as a helical span at residues 272 to 292; that stretch reads ALISVSYTIITPLFNPMIYSL. Topologically, residues 293–312 are cytoplasmic; that stretch reads RNKEFKSALCKIVRRTISLL.

The protein belongs to the G-protein coupled receptor 1 family.

It is found in the cell membrane. Its function is as follows. Odorant receptor. This chain is Olfactory receptor 10K2 (OR10K2), found in Homo sapiens (Human).